The following is a 229-amino-acid chain: Putative N-acetylmannosamine-6-phosphate 2-epimerase (229 aa).

Belongs to the NanE family.

It catalyses the reaction an N-acyl-D-glucosamine 6-phosphate = an N-acyl-D-mannosamine 6-phosphate. Its pathway is amino-sugar metabolism; N-acetylneuraminate degradation; D-fructose 6-phosphate from N-acetylneuraminate: step 3/5. Its function is as follows. Converts N-acetylmannosamine-6-phosphate (ManNAc-6-P) to N-acetylglucosamine-6-phosphate (GlcNAc-6-P). In Escherichia coli O139:H28 (strain E24377A / ETEC), this protein is Putative N-acetylmannosamine-6-phosphate 2-epimerase.